Reading from the N-terminus, the 413-residue chain is Multifunctional CCA protein (413 aa).

ATP contacts are provided by glycine 8 and arginine 11. Positions 8 and 11 each coordinate CTP. 2 residues coordinate Mg(2+): aspartate 21 and aspartate 23. ATP-binding residues include arginine 91, arginine 143, and arginine 146. Positions 91, 143, and 146 each coordinate CTP. The HD domain maps to 232-333; the sequence is TGVHVMMVVD…VRLFERSDAL (102 aa).

This sequence belongs to the tRNA nucleotidyltransferase/poly(A) polymerase family. Bacterial CCA-adding enzyme type 1 subfamily. In terms of assembly, monomer. Can also form homodimers and oligomers. Mg(2+) serves as cofactor. Ni(2+) is required as a cofactor.

It carries out the reaction a tRNA precursor + 2 CTP + ATP = a tRNA with a 3' CCA end + 3 diphosphate. The enzyme catalyses a tRNA with a 3' CCA end + 2 CTP + ATP = a tRNA with a 3' CCACCA end + 3 diphosphate. Its function is as follows. Catalyzes the addition and repair of the essential 3'-terminal CCA sequence in tRNAs without using a nucleic acid template. Adds these three nucleotides in the order of C, C, and A to the tRNA nucleotide-73, using CTP and ATP as substrates and producing inorganic pyrophosphate. tRNA 3'-terminal CCA addition is required both for tRNA processing and repair. Also involved in tRNA surveillance by mediating tandem CCA addition to generate a CCACCA at the 3' terminus of unstable tRNAs. While stable tRNAs receive only 3'-terminal CCA, unstable tRNAs are marked with CCACCA and rapidly degraded. This chain is Multifunctional CCA protein, found in Burkholderia cenocepacia (strain HI2424).